We begin with the raw amino-acid sequence, 852 residues long: Zinc finger and SCAN domain-containing protein 29 (852 aa).

Residues 18–100 (RQRFRRFHYQ…TLVEDLEREP (83 aa)) enclose the SCAN box domain. 3 disordered regions span residues 96-182 (LERE…PKSG), 347-400 (ASHS…SAAP), and 502-557 (PNDG…RAPV). Lysine 112 participates in a covalent cross-link: Glycyl lysine isopeptide (Lys-Gly) (interchain with G-Cter in SUMO2). At serine 153 the chain carries Phosphoserine. Lysine 180 participates in a covalent cross-link: Glycyl lysine isopeptide (Lys-Gly) (interchain with G-Cter in SUMO2). Polar residues predominate over residues 508–517 (ETASCPVQGT). Residues 528–545 (EADEATEEDSDDDEEDTE) show a composition bias toward acidic residues. A Phosphoserine modification is found at serine 561. Lysine 576 is covalently cross-linked (Glycyl lysine isopeptide (Lys-Gly) (interchain with G-Cter in SUMO2)). The interval 603-625 (QGKGNESDCRSGRQWAKTSGEKR) is disordered. Lysine 652 is covalently cross-linked (Glycyl lysine isopeptide (Lys-Gly) (interchain with G-Cter in SUMO2)). 6 C2H2-type zinc fingers span residues 678-700 (YKCA…RRIH), 706-728 (YKCL…RRIH), 734-756 (YQCG…QRTH), 762-784 (YQCE…RRIH), 790-812 (HVCP…HRTH), and 818-840 (YGCH…GEIH).

This sequence belongs to the krueppel C2H2-type zinc-finger protein family.

The protein resides in the nucleus. May be involved in transcriptional regulation. This is Zinc finger and SCAN domain-containing protein 29 (ZSCAN29) from Homo sapiens (Human).